A 725-amino-acid chain; its full sequence is Kelch domain-containing protein SSO1033 (725 aa).

An N-terminal signal peptide occupies residues 1–28 (MKYGNMKKWAPLILFLFSLLLLQGISLH). Kelch repeat units lie at residues 59–100 (SLYI…VYNN), 101–145 (TIYV…VYNN), 146–199 (AIYV…FNGT), 201–248 (LIIV…YYRG), 250–297 (LFIV…QVGN), and 299–342 (LYLA…VTLG). 4 consecutive Fibronectin type-III domains span residues 323–410 (PPLP…TPAS), 411–504 (VPNP…TKAS), 505–583 (VFAF…VVYY), and 585–665 (PPAS…TGDY).

This chain is Kelch domain-containing protein SSO1033, found in Saccharolobus solfataricus (strain ATCC 35092 / DSM 1617 / JCM 11322 / P2) (Sulfolobus solfataricus).